Here is a 1193-residue protein sequence, read N- to C-terminus: MKIKFINYLLLFFIIFLNYNGFVKSDCYQELDLVLSNSCRNGPSKLVIHESIYSFESIELTPFVQPKLLNYYSWDLQDGINYFISYRYKNCSNIISKPFASKGMYYKLLAEPLCLNTYIPVRVYNWGAGGIEYNFYSVPSTIWVNSQNGLCSFQSPISPQSYTKGVLNDGALKFVGPTCGFKNGTITIDLTKGYSNYHLFLQSDYLFDNEIQPSSEGFYNGLESENYSLFVDSEQCATERIEIYMKDVFAPLEIDFENVPDLFHNSTISLSLSSGNNGILNNTNINAFVIQSERLLTDWNHVQTQITSNTYYGYAYNKDFSTEAGQTKCVYSETLLFDNYSPNFNFTISKSESCLENVSITFYPLPNQNIKVYDYSSESGIPFSMKDNVLSVENNLNLWIFDTNQNYGIVHSTVFDIPSYKIIETSNGIGCWKTYNITIVNYENYKNLRIHFYNENSEFNFYPVEGVFINVPALYYYVTYNAGDCETESYFVIDKLDRNTPMDNVVLEFNTLEIGNCTHETSFMVTVKSVFGSYSKTMQTFYDKEFTIFLPNCSCQINGIYVAPRLIDGDSLIYELLTDPNCNSTDTLIRFTSPSQDYSISSVYQNGVQLQYYNNLNGYYISSGENNITVNYEGDQYCYRTETITIQSVYEVPLVQITPVSDCRNPNGKIEISNFQIFYNLELVFNSNSKPINQGFIENLASGTYTINYYSNQTCINSITVYVPSSENVAEITTSVISNPTCDNGPFSDGMIRVALKYEGNQINNFTIQNQDAEFTYLNDGVYPIAGVGVNSLTISYLSCIWKRDITTVLNKPSFTLEKVFNDTCDLQSVYKLVSSNPNIEIDYIDSSNGFSYLNNYYLVFQNSGDFGYYVAWNSRCYEYYTQQIIMDNYDRDSNVKYIDYEIVKPDNCNSLKIDLIITNMNKFISLTIENKLPTPINSTHSIFKNLPPSKSYDILYTLLNGCVAYQTVGIDEFKSGFTKETIDIIKTSDICYSGKASIQLSNLDFDNYYYYIKNSNSLMGVTDSYDSIQPQQSGNINGTILLSNYNPGSYKIYRGCKSMANCYLETNVVIESEDPIIESISVTDSYDKLNNGTVEIKLNYNSPYPINFKIIGTQLSNQNGKFGNLTPKTYEVQVTLTDRMCPVTLSKSFTINLKTSPPTPSPQDPSDELSTSSFVQVNLLFLSILIFTIFIF.

Residues 1-25 form the signal peptide; sequence MKIKFINYLLLFFIIFLNYNGFVKS. The Extracellular segment spans residues 26–1172; it reads DCYQELDLVL…PQDPSDELST (1147 aa). Residues asparagine 90, asparagine 183, asparagine 226, asparagine 265, asparagine 281, asparagine 345, asparagine 357, asparagine 436, asparagine 516, asparagine 552, asparagine 583, asparagine 627, asparagine 712, asparagine 765, asparagine 822, asparagine 938, asparagine 1038, and asparagine 1092 are each glycosylated (N-linked (GlcNAc...) asparagine). Residues 1173–1193 form a helical membrane-spanning segment; that stretch reads SSFVQVNLLFLSILIFTIFIF.

It localises to the membrane. This is an uncharacterized protein from Dictyostelium discoideum (Social amoeba).